A 1068-amino-acid chain; its full sequence is Leucine zipper protein 1 (1068 aa).

Position 2 is an N-acetylalanine (alanine 2). The stretch at 11-354 (ASNRHLRFKL…KLQVRKQKEL (344 aa)) forms a coiled coil. 3 disordered regions span residues 251 to 292 (LSSK…VKDL), 375 to 402 (TKLKGHGSEASVSKHTSRELSPQHKRER), and 432 to 558 (AAKA…QAVE). Residues 254-292 (KESKRKGSLDYLKQVENETRDKSENEKNRNQEDNKVKDL) show a composition bias toward basic and acidic residues. Phosphoserine is present on residues serine 256, serine 261, serine 395, serine 513, serine 571, serine 575, serine 612, and serine 660. Polar residues predominate over residues 510–519 (RTFSDSTHVS). Residues 677-700 (TTITPEPEPKPQPNSREKVKSRGG) form a disordered region. Position 680 is a phosphothreonine (threonine 680). 2 positions are modified to phosphoserine: serine 691 and serine 746. Residues 782 to 829 (QKSTSKSVTSKVTSSITIYPSDSSGPRAVPSEAPRERHTSTSNIQVGP) form a disordered region. Positions 785–796 (TSKSVTSKVTSS) are enriched in low complexity. The tract at residues 834–884 (AISNHVSSPLELSIHKHDITLQLTEAERVGDGSPKNRAEMVVSRSSILIKP) is required for interaction with FLNA. Serine 906 is subject to Phosphoserine. The disordered stretch occupies residues 924–945 (RDLKCSEDPPTGIGRNMEATNA). Threonine 952 carries the phosphothreonine modification. Disordered stretches follow at residues 959-995 (QPRSQPSEQGARRVGNSGDAPELSPRRTQSSLTASEV) and 1033-1068 (NPLEHSELPGKQGLPEPEPVWTEERLHPAKPYAEED). Residues 984-994 (RRTQSSLTASE) show a composition bias toward polar residues. At serine 988 the chain carries Phosphoserine.

As to quaternary structure, component of the CERF-1 ISWI chromatin remodeling complex (also called the CECR2-containing remodeling factor (CERF) complex) at least composed of CECR2 and SMARCA1. Component of the CERF-5 ISWI chromatin remodeling complex at least composed of CECR2 and SMARCA5/SNF2H. LUZP1 is detected as part of the CERF-1 and CERF-5 complexes in embryonic stem (ES) cells where it is involved in complex stabilization but is not detected in the complexes in the testis. Interacts (via C-terminus) with LIMA1/EPLIN; both proteins restrict ciliation and may work together to regulate this process. Interacts with myosin light chain MYL9; the interaction results in inhibition of phosphorylation of MYL9 by DAPK3. Interacts with DAPK3; the interaction is likely to occur throughout the cell cycle and reduces the LUZP1-mediated suppression of MYL9 phosphorylation. Interacts with the chromosomal passenger complex (CPC); CPC kinase activity is required for localization of LUZP1 to the centromere. As to expression, predominantly expressed in the brain (at protein level).

Its subcellular location is the cytoplasm. The protein resides in the cytoskeleton. It localises to the microtubule organizing center. The protein localises to the centrosome. It is found in the cilium basal body. Its subcellular location is the midbody. The protein resides in the chromosome. It localises to the centromere. The protein localises to the spindle. It is found in the stress fiber. Its subcellular location is the nucleus. The protein resides in the cell projection. It localises to the dendrite. The protein localises to the perikaryon. It is found in the cell junction. Its subcellular location is the tight junction. Functionally, F-actin cross-linking protein. Stabilizes actin and acts as a negative regulator of primary cilium formation. Positively regulates the phosphorylation of both myosin II and protein phosphatase 1 regulatory subunit PPP1R12A/MYPT1 and promotes the assembly of myosin II stacks within actin stress fibers. Inhibits the phosphorylation of myosin light chain MYL9 by DAPK3 and suppresses the constriction velocity of the contractile ring during cytokinesis. Binds to microtubules and promotes epithelial cell apical constriction by up-regulating levels of diphosphorylated myosin light chain (MLC) through microtubule-dependent inhibition of MLC dephosphorylation by myosin phosphatase. Involved in regulation of cell migration, nuclear size and centriole number, probably through regulation of the actin cytoskeleton. Component of the CERF-1 and CERF-5 chromatin remodeling complexes in embryonic stem cells where it acts to stabilize the complexes. Plays a role in embryonic brain and cardiovascular development. This chain is Leucine zipper protein 1 (Luzp1), found in Mus musculus (Mouse).